Here is a 668-residue protein sequence, read N- to C-terminus: Biosynthetic arginine decarboxylase (668 aa).

At K105 the chain carries N6-(pyridoxal phosphate)lysine. Substrate is bound at residue 286-296; the sequence is LDVGGGLGVDY.

It belongs to the Orn/Lys/Arg decarboxylase class-II family. SpeA subfamily. Mg(2+) serves as cofactor. The cofactor is pyridoxal 5'-phosphate.

It catalyses the reaction L-arginine + H(+) = agmatine + CO2. Catalyzes the biosynthesis of agmatine from arginine. The protein is Biosynthetic arginine decarboxylase of Rhodopirellula baltica (strain DSM 10527 / NCIMB 13988 / SH1).